The following is a 258-amino-acid chain: Phosphate import ATP-binding protein PstB (258 aa).

Residues 12–253 form the ABC transporter domain; sequence IEVKNLNFYY…PARKETEDYI (242 aa). ATP is bound at residue 44–51; it reads GPSGCGKS.

This sequence belongs to the ABC transporter superfamily. Phosphate importer (TC 3.A.1.7) family. The complex is composed of two ATP-binding proteins (PstB), two transmembrane proteins (PstC and PstA) and a solute-binding protein (PstS).

It localises to the cell inner membrane. The enzyme catalyses phosphate(out) + ATP + H2O = ADP + 2 phosphate(in) + H(+). Part of the ABC transporter complex PstSACB involved in phosphate import. Responsible for energy coupling to the transport system. The sequence is that of Phosphate import ATP-binding protein PstB from Bordetella avium (strain 197N).